The primary structure comprises 415 residues: Serine hydroxymethyltransferase 2 (415 aa).

Residues L121 and 125 to 127 each bind (6S)-5,6,7,8-tetrahydrofolate; that span reads GHL. An N6-(pyridoxal phosphate)lysine modification is found at K229.

This sequence belongs to the SHMT family. As to quaternary structure, homodimer. Pyridoxal 5'-phosphate is required as a cofactor.

The protein resides in the cytoplasm. The catalysed reaction is (6R)-5,10-methylene-5,6,7,8-tetrahydrofolate + glycine + H2O = (6S)-5,6,7,8-tetrahydrofolate + L-serine. It participates in one-carbon metabolism; tetrahydrofolate interconversion. The protein operates within amino-acid biosynthesis; glycine biosynthesis; glycine from L-serine: step 1/1. In terms of biological role, catalyzes the reversible interconversion of serine and glycine with tetrahydrofolate (THF) serving as the one-carbon carrier. This reaction serves as the major source of one-carbon groups required for the biosynthesis of purines, thymidylate, methionine, and other important biomolecules. Also exhibits THF-independent aldolase activity toward beta-hydroxyamino acids, producing glycine and aldehydes, via a retro-aldol mechanism. This chain is Serine hydroxymethyltransferase 2, found in Bordetella bronchiseptica (strain ATCC BAA-588 / NCTC 13252 / RB50) (Alcaligenes bronchisepticus).